The following is a 230-amino-acid chain: MKIGIIGAMAQEVEILLGYMAEPKLTEIAGCKIYEGKINNTDIALLQSGIGKTAAAMGTALLLQLTKPEMVINTGSAGGLDANLNVGDIVISTEVRHHDIDVTAFGYEKGQLPANPAAFMANEQLAQIAIKETEKAGFNAVSGLICSGDLFVNGNDMIARIRNDFPSVKAVEMEAASIAQVCHAFQVPFVVVRAISDVADKESHLSFDEFLPLAAEKSSEIVLAMLNNFA.

E12 (proton acceptor) is an active-site residue. Substrate-binding positions include G78, V152, and 173-174 (ME). D197 serves as the catalytic Proton donor.

It belongs to the PNP/UDP phosphorylase family. MtnN subfamily.

It carries out the reaction S-adenosyl-L-homocysteine + H2O = S-(5-deoxy-D-ribos-5-yl)-L-homocysteine + adenine. The catalysed reaction is S-methyl-5'-thioadenosine + H2O = 5-(methylsulfanyl)-D-ribose + adenine. It catalyses the reaction 5'-deoxyadenosine + H2O = 5-deoxy-D-ribose + adenine. It participates in amino-acid biosynthesis; L-methionine biosynthesis via salvage pathway; S-methyl-5-thio-alpha-D-ribose 1-phosphate from S-methyl-5'-thioadenosine (hydrolase route): step 1/2. Catalyzes the irreversible cleavage of the glycosidic bond in both 5'-methylthioadenosine (MTA) and S-adenosylhomocysteine (SAH/AdoHcy) to adenine and the corresponding thioribose, 5'-methylthioribose and S-ribosylhomocysteine, respectively. Also cleaves 5'-deoxyadenosine, a toxic by-product of radical S-adenosylmethionine (SAM) enzymes, into 5-deoxyribose and adenine. The sequence is that of 5'-methylthioadenosine/S-adenosylhomocysteine nucleosidase from Glaesserella parasuis serovar 5 (strain SH0165) (Haemophilus parasuis).